A 130-amino-acid chain; its full sequence is Small ribosomal subunit protein uS9 (130 aa).

Positions 98-130 (LKRAGMLTRDPRMKERKKPGLKGARRSPQFSKR) are disordered. The span at 111–130 (KERKKPGLKGARRSPQFSKR) shows a compositional bias: basic residues.

This sequence belongs to the universal ribosomal protein uS9 family.

The protein is Small ribosomal subunit protein uS9 of Macrococcus caseolyticus (strain JCSC5402) (Macrococcoides caseolyticum).